Reading from the N-terminus, the 536-residue chain is Formate--tetrahydrofolate ligase (536 aa).

51–58 (TAAGEGKT) provides a ligand contact to ATP.

Belongs to the formate--tetrahydrofolate ligase family.

The catalysed reaction is (6S)-5,6,7,8-tetrahydrofolate + formate + ATP = (6R)-10-formyltetrahydrofolate + ADP + phosphate. It participates in one-carbon metabolism; tetrahydrofolate interconversion. This Thermoplasma volcanium (strain ATCC 51530 / DSM 4299 / JCM 9571 / NBRC 15438 / GSS1) protein is Formate--tetrahydrofolate ligase.